The primary structure comprises 96 residues: ESAT-6-like protein EsxH (96 aa).

Zn(2+) is bound by residues His-14, His-70, His-76, and Glu-77.

This sequence belongs to the WXG100 family. ESAT-6 subfamily. As to quaternary structure, forms a tight 1:1 complex with EsxG. When it is complexed to EsxG, interacts directly with host HGS/HRS.

It is found in the secreted. EsxH, in complex with EsxG, disrupts ESCRT function and impairs host phagosome maturation, thereby promoting intracellular bacterial growth. The complex acts by interacting, via EsxH, with the host hepatocyte growth factor-regulated tyrosine kinase substrate (HGS/HRS), a component of the ESCRT machinery. The protein is ESAT-6-like protein EsxH of Mycobacterium tuberculosis (strain ATCC 25618 / H37Rv).